We begin with the raw amino-acid sequence, 737 residues long: tRNA (guanine(27)-N(2))-dimethyltransferase (737 aa).

The segment covering Met-1–Leu-10 has biased composition (acidic residues). The segment at Met-1–Leu-65 is disordered. The span at Val-17–Pro-49 shows a compositional bias: low complexity. Phosphothreonine is present on Thr-24. Over residues Ala-50 to Ala-62 the composition is skewed to pro residues. Ser-72 carries the post-translational modification Phosphoserine. The Nucleolar localization signal motif lies at His-141–Arg-145. The segment at Tyr-190–His-212 adopts a C2H2-type zinc-finger fold. One can recognise a Trm1 methyltransferase domain in the interval Glu-233 to Leu-692. Residues Arg-266, Asp-313, Asp-363, and Ala-364 each contribute to the S-adenosyl-L-methionine site. Zn(2+) contacts are provided by Cys-494, Cys-497, Cys-519, and Cys-521. Lys-589 participates in a covalent cross-link: Glycyl lysine isopeptide (Lys-Gly) (interchain with G-Cter in SUMO2). A Phosphoserine modification is found at Ser-616.

Belongs to the class I-like SAM-binding methyltransferase superfamily. Trm1 family.

It is found in the nucleus. It localises to the nucleolus. It catalyses the reaction guanosine(27) in tRNA(Tyr) + 2 S-adenosyl-L-methionine = N(2)-dimethylguanosine(27) in tRNA(Tyr) + 2 S-adenosyl-L-homocysteine + 2 H(+). Specifically dimethylates a single guanine residue at position 27 of tRNA(Tyr) using S-adenosyl-L-methionine as donor of the methyl groups. Dimethylation at position 27 of tRNA(Tyr) is required for efficient translation of tyrosine codons. Also required to maintain 3-(3-amino-3-carboxypropyl)uridine (acp3U) in the D-loop of several cytoplasmic tRNAs. This chain is tRNA (guanine(27)-N(2))-dimethyltransferase (TRMT1L), found in Bos taurus (Bovine).